Here is a 426-residue protein sequence, read N- to C-terminus: Dihydroorotase (426 aa).

Residues H58 and H60 each coordinate Zn(2+). Residues 60–62 (HLR) and N92 contribute to the substrate site. The Zn(2+) site is built by D150, H177, and H230. N276 contacts substrate. A Zn(2+)-binding site is contributed by D303. The active site involves D303. Substrate-binding positions include H307 and 321–322 (FG).

This sequence belongs to the metallo-dependent hydrolases superfamily. DHOase family. Class I DHOase subfamily. Requires Zn(2+) as cofactor.

It catalyses the reaction (S)-dihydroorotate + H2O = N-carbamoyl-L-aspartate + H(+). The protein operates within pyrimidine metabolism; UMP biosynthesis via de novo pathway; (S)-dihydroorotate from bicarbonate: step 3/3. Its function is as follows. Catalyzes the reversible cyclization of carbamoyl aspartate to dihydroorotate. In Listeria monocytogenes serotype 4b (strain CLIP80459), this protein is Dihydroorotase.